The sequence spans 648 residues: Threonine--tRNA ligase (648 aa).

One can recognise a TGS domain in the interval 1–61 (MIKITLPDGS…TTDGSLVLYT (61 aa)). Positions 240 to 539 (DHRKLGKELE…LLEHTAGNFP (300 aa)) are catalytic. Residues cysteine 335, histidine 386, and histidine 516 each coordinate Zn(2+).

The protein belongs to the class-II aminoacyl-tRNA synthetase family. In terms of assembly, homodimer. Zn(2+) is required as a cofactor.

Its subcellular location is the cytoplasm. It catalyses the reaction tRNA(Thr) + L-threonine + ATP = L-threonyl-tRNA(Thr) + AMP + diphosphate + H(+). Its function is as follows. Catalyzes the attachment of threonine to tRNA(Thr) in a two-step reaction: L-threonine is first activated by ATP to form Thr-AMP and then transferred to the acceptor end of tRNA(Thr). Also edits incorrectly charged L-seryl-tRNA(Thr). The polypeptide is Threonine--tRNA ligase (Flavobacterium psychrophilum (strain ATCC 49511 / DSM 21280 / CIP 103535 / JIP02/86)).